We begin with the raw amino-acid sequence, 257 residues long: Large ribosomal subunit protein uL2 (257 aa).

A disordered region spans residues 210–231 (PHGGGNHQHIGKASTVKRGTSA).

The protein belongs to the universal ribosomal protein uL2 family.

The protein resides in the cytoplasm. This is Large ribosomal subunit protein uL2 (RpL8) from Mamestra brassicae (Cabbage moth).